We begin with the raw amino-acid sequence, 334 residues long: Syntaxin-18 (334 aa).

Topologically, residues Met-1–Asn-308 are cytoplasmic. 2 disordered regions span residues Gly-29–Ser-50 and Leu-166–Glu-225. Composition is skewed to basic and acidic residues over residues Gly-33–Ser-50, Leu-166–Ser-186, and Ser-193–Leu-207. The t-SNARE coiled-coil homology domain maps to Ile-242 to Ala-304. A helical; Anchor for type IV membrane protein membrane pass occupies residues Ala-309–Leu-329. Topologically, residues Asp-330–Ser-334 are vesicular.

It belongs to the syntaxin family. In terms of assembly, component of a SNARE complex consisting of STX18, USE1L, BNIP1/SEC20L, and SEC22B. RINT1/TIP20L and ZW10 are associated with the complex through interaction with BNIP1/SEC20L. Interacts directly with USE1L and BNIP1/SEC20L.

The protein resides in the endoplasmic reticulum membrane. Its subcellular location is the golgi apparatus membrane. Its function is as follows. Syntaxin that may be involved in targeting and fusion of Golgi-derived retrograde transport vesicles with the ER. In Rattus norvegicus (Rat), this protein is Syntaxin-18 (Stx18).